Reading from the N-terminus, the 492-residue chain is Thyroid hormone receptor alpha (492 aa).

The tract at residues 1 to 33 (MEQKPSKVECGSDPEENSARSPDGKRKRKNGQC) is disordered. The segment at 1 to 52 (MEQKPSKVECGSDPEENSARSPDGKRKRKNGQCPLKSSMSGYIPSYLDKDEQ) is modulating. Positions 53, 56, 70, 73, 91, 97, 107, and 110 each coordinate Zn(2+). 2 NR C4-type zinc fingers span residues 53–73 (CVVC…CEGC) and 91–115 (CKYD…FKKC). Residues 53–127 (CVVCGDKATG…VGMAMDLVLD (75 aa)) constitute a DNA-binding region (nuclear receptor). The 245-residue stretch at 163–407 (EEWDLIHVAT…EGQQLLGMHV (245 aa)) folds into the NR LBD domain. Positions 228 and 277 each coordinate 3,3',5-triiodo-L-thyronine. The interval 457–492 (AVCGEDDSSEASSLSSSSSDEDTEVFEDLAGKAASP) is disordered.

It belongs to the nuclear hormone receptor family. NR1 subfamily. In terms of assembly, binds DNA as a dimer; homodimer and heterodimer with RXRB. Interacts with NCOA3 and NCOA6 coactivators, leading to a strong increase of transcription of target genes. Probably interacts with SFPQ. Interacts with C1D. Interacts with AKAP13. Interacts with TP53INP2. Interacts with PER2. Isoform alpha-2 and isoform alpha-1 interact with TACC1, but the interaction with alpha-1 is weaker. The interaction with isoform alpha-1, but not alpha-2, is decreased in the presence of thyroid hormone T3.

The protein localises to the nucleus. The protein resides in the cytoplasm. In terms of biological role, nuclear hormone receptor that can act as a repressor or activator of transcription. High affinity receptor for thyroid hormones, including triiodothyronine and thyroxine. This Rattus norvegicus (Rat) protein is Thyroid hormone receptor alpha (Thra).